The sequence spans 493 residues: Aminotransferase swnA (493 aa).

Belongs to the class-I pyridoxal-phosphate-dependent aminotransferase family. It depends on pyridoxal 5'-phosphate as a cofactor.

It participates in mycotoxin biosynthesis. Aminotransferase; part of the gene cluster that mediates the biosynthesis of swainsonine (SW), a cytotoxic fungal alkaloid and a potential cancer therapy drug. Swainsonine production occurs via a multibranched pathway and is dispensable for fungal colonization of plants and infection of insect hosts. The first step of swainsonine biosynthesis is the production of the precursor pipecolic acid (PA) via conversion of L-lysine (Lys) to 1-piperideine-6-carboxylate (P6C) by the aminotransferase swnA, the latter being further reduced to PA by the reductase swnR. The PKS-NRPS hybrid synthetase swnK uptakes and condensates PA and malonyl-CoA with and without skipping of the ketoreductase (KR) domain in order to produce 3 intermediates, 1-oxoindolizidine, (1S)-1-hydroxyindolizin, and (1R)-1-hydroxyindolizine; with the transisomer (1S)-1-hydroxyindolizin being predominant. The terminal thioester reductase (TE) domain of swnK is involved in reduction of the thioester bond to release the intermediate aldehydes. The oxidoreductase swnN could contribute to the reduction of 1-oxoindolizidine to (1S)-1-hydroxyindolizin and (1R)-1-hydroxyindolizine, contributing to the major route of SW production. The dioxygenase swnH2 would be responsible for the oxidization of (1R)-1-hydroxyindolizine into (1R,2S)-1,2-dihydroxyindolizine and of (1S)-1-hydroxyindolizin to yield both (1R,2S)-1,2-dihydroxyindolizine and (1S,2S)-1,2-dihydroxyindolizine. The dioxygenase swnH1 then performs the conversion of the 1,2-dihydroxyindolizine epimers to SW. In Arthroderma benhamiae (strain ATCC MYA-4681 / CBS 112371) (Trichophyton mentagrophytes), this protein is Aminotransferase swnA.